The primary structure comprises 171 residues: Ribosome maturation factor RimM (171 aa).

Residues 97–170 (EGEYYYHEII…LVTIHVMEGL (74 aa)) enclose the PRC barrel domain.

This sequence belongs to the RimM family. In terms of assembly, binds ribosomal protein uS19.

The protein localises to the cytoplasm. Functionally, an accessory protein needed during the final step in the assembly of 30S ribosomal subunit, possibly for assembly of the head region. Essential for efficient processing of 16S rRNA. May be needed both before and after RbfA during the maturation of 16S rRNA. It has affinity for free ribosomal 30S subunits but not for 70S ribosomes. The sequence is that of Ribosome maturation factor RimM from Bacillus cereus (strain ZK / E33L).